The following is a 297-amino-acid chain: Carboxysome assembly protein CcmO (297 aa).

Residues Met1–Ser29 form a disordered region. The segment covering Pro18 to Ser29 has biased composition (polar residues). 2 consecutive BMC domains span residues Ala32–Pro116 and Ser138–Pro222.

The protein belongs to the bacterial microcompartments protein family. Homooligomerizes, possibly as a trimer, interacts with CcmK in the carboxysome.

It localises to the carboxysome. Required for formation of the carboxysome, a polyhedral inclusion where RuBisCO (ribulose bisphosphate carboxylase, rbcL-rbcS) is sequestered. Required for recruitment of major shell protein CcmK2 to the pre-carboxysome. Suggested to be a carboxysome shell protein. This chain is Carboxysome assembly protein CcmO, found in Synechocystis sp. (strain ATCC 27184 / PCC 6803 / Kazusa).